Reading from the N-terminus, the 289-residue chain is Acetyl-coenzyme A carboxylase carboxyl transferase subunit beta 2 (289 aa).

Residues 25–289 (VWTKCPSCDQ…TNTSIRLEVK (265 aa)) enclose the CoA carboxyltransferase N-terminal domain. Zn(2+)-binding residues include cysteine 29, cysteine 32, cysteine 48, and cysteine 51. The C4-type zinc-finger motif lies at 29–51 (CPSCDQVLYRIALKENLEVCPKC).

It belongs to the AccD/PCCB family. As to quaternary structure, acetyl-CoA carboxylase is a heterohexamer composed of biotin carboxyl carrier protein (AccB), biotin carboxylase (AccC) and two subunits each of ACCase subunit alpha (AccA) and ACCase subunit beta (AccD). It depends on Zn(2+) as a cofactor.

The protein resides in the cytoplasm. The enzyme catalyses N(6)-carboxybiotinyl-L-lysyl-[protein] + acetyl-CoA = N(6)-biotinyl-L-lysyl-[protein] + malonyl-CoA. It functions in the pathway lipid metabolism; malonyl-CoA biosynthesis; malonyl-CoA from acetyl-CoA: step 1/1. In terms of biological role, component of the acetyl coenzyme A carboxylase (ACC) complex. Biotin carboxylase (BC) catalyzes the carboxylation of biotin on its carrier protein (BCCP) and then the CO(2) group is transferred by the transcarboxylase to acetyl-CoA to form malonyl-CoA. The sequence is that of Acetyl-coenzyme A carboxylase carboxyl transferase subunit beta 2 from Vibrio parahaemolyticus serotype O3:K6 (strain RIMD 2210633).